The chain runs to 234 residues: Covalently-linked cell wall protein 14 (234 aa).

The signal sequence occupies residues 1-22; it reads MASFLKISTLIAIVSTLQTTLA. The CFEM domain occupies 23-109; the sequence is APPACLLACV…SSEESSASAS (87 aa). 4 disulfide bridges follow: cysteine 27–cysteine 66, cysteine 31–cysteine 61, cysteine 41–cysteine 49, and cysteine 51–cysteine 82. Residue aspartate 46 participates in heme binding. The span at 86 to 207 shows a compositional bias: low complexity; the sequence is SSQSSSSESE…ASSSESTTAT (122 aa). A disordered region spans residues 86–208; that stretch reads SSQSSSSESE…SSSESTTATG (123 aa). The GPI-anchor amidated glycine moiety is linked to residue glycine 215. A propeptide spans 216–234 (removed in mature form); it reads SAAKVGLGALVGLVGAVLL.

The protein belongs to the CCW14 family. The GPI-anchor is attached to the protein in the endoplasmic reticulum and serves to target the protein to the cell surface. There, the glucosamine-inositol phospholipid moiety is cleaved off and the GPI-modified mannoprotein is covalently attached via its lipidless GPI glycan remnant to the 1,6-beta-glucan of the outer cell wall layer.

The protein resides in the secreted. The protein localises to the cell wall. It is found in the membrane. Its function is as follows. Beta-glucan associated cell wall protein involved in cell wall structure. May serve as cross-linking or coat-forming wall protein. The sequence is that of Covalently-linked cell wall protein 14 (SSR1) from Candida albicans (strain SC5314 / ATCC MYA-2876) (Yeast).